The primary structure comprises 384 residues: MLAPMAGVTNVTFRTLCREFGSTRGNLLRPAPPHLRSPLEQSQVGTISGLYVCEMVTARALVERNAVTIHMTTFAPDESPRSLQLYTVDPATTYTAAKMVADEGLADHIDMNFGCPMPKVTRRGGGAALPYKRRLFGQIVAAAVRATEGTKIPVTVKFRIGIDDEHHTHLDAGRIAEAEGAAAVALHARTAAQRYSGTADWAQIAQLKQQVRTIPVLGNGDIYDASDALAMMAVTGCDGVVIGRGCLGRPWLFAELSAAFTGRPAPAPPTLGEVAEIVRRHGKLLVAHFGEDKGMRDIRKHIAWYLHGFPAGSELRNALALVKTLDELDCLLNRLDGAVPFPDAAIGPRGRQGSPAWVALPDSWLTDPDDCTVPIGADIMESGG.

FMN is bound by residues 4 to 6 (PMA) and Gln-84. Cys-115 serves as the catalytic Proton donor. Residues Lys-157, 219–221 (NGD), and 243–244 (GR) each bind FMN.

The protein belongs to the Dus family. FMN is required as a cofactor.

The enzyme catalyses a 5,6-dihydrouridine in tRNA + NAD(+) = a uridine in tRNA + NADH + H(+). The catalysed reaction is a 5,6-dihydrouridine in tRNA + NADP(+) = a uridine in tRNA + NADPH + H(+). Its function is as follows. Catalyzes the synthesis of 5,6-dihydrouridine (D), a modified base found in the D-loop of most tRNAs, via the reduction of the C5-C6 double bond in target uridines. This Mycobacterium leprae (strain TN) protein is Probable tRNA-dihydrouridine synthase (dus).